The following is a 454-amino-acid chain: tRNA modification GTPase MnmE (454 aa).

(6S)-5-formyl-5,6,7,8-tetrahydrofolate is bound by residues arginine 23, glutamate 80, and lysine 120. A TrmE-type G domain is found at 216 to 377 (GMKVVIAGRP…LRNHLKQSMG (162 aa)). K(+) is bound at residue asparagine 226. Residues 226–231 (NAGKSS), 245–251 (TDIAGTT), 270–273 (DTAG), 335–338 (NKAD), and 358–360 (SAR) contribute to the GTP site. A Mg(2+)-binding site is contributed by serine 230. The K(+) site is built by threonine 245, isoleucine 247, and threonine 250. A Mg(2+)-binding site is contributed by threonine 251. Position 454 (lysine 454) interacts with (6S)-5-formyl-5,6,7,8-tetrahydrofolate.

It belongs to the TRAFAC class TrmE-Era-EngA-EngB-Septin-like GTPase superfamily. TrmE GTPase family. Homodimer. Heterotetramer of two MnmE and two MnmG subunits. The cofactor is K(+).

Its subcellular location is the cytoplasm. Exhibits a very high intrinsic GTPase hydrolysis rate. Involved in the addition of a carboxymethylaminomethyl (cmnm) group at the wobble position (U34) of certain tRNAs, forming tRNA-cmnm(5)s(2)U34. This Enterobacter sp. (strain 638) protein is tRNA modification GTPase MnmE.